Here is a 403-residue protein sequence, read N- to C-terminus: Argininosuccinate synthase (403 aa).

ATP-binding positions include 12–20 (AYSGGLDTS) and alanine 39. L-citrulline-binding residues include tyrosine 90 and serine 95. Glycine 120 contacts ATP. L-aspartate-binding residues include threonine 122, asparagine 126, and aspartate 127. Asparagine 126 contributes to the L-citrulline binding site. The L-citrulline site is built by arginine 130, serine 182, serine 191, glutamate 267, and tyrosine 279.

Belongs to the argininosuccinate synthase family. Type 1 subfamily. As to quaternary structure, homotetramer.

It localises to the cytoplasm. The catalysed reaction is L-citrulline + L-aspartate + ATP = 2-(N(omega)-L-arginino)succinate + AMP + diphosphate + H(+). Its pathway is amino-acid biosynthesis; L-arginine biosynthesis; L-arginine from L-ornithine and carbamoyl phosphate: step 2/3. In Vesicomyosocius okutanii subsp. Calyptogena okutanii (strain HA), this protein is Argininosuccinate synthase.